Consider the following 207-residue polypeptide: High frequency lysogenization protein HflD homolog (207 aa).

The protein belongs to the HflD family.

The protein resides in the cytoplasm. The protein localises to the cell inner membrane. The polypeptide is High frequency lysogenization protein HflD homolog (Teredinibacter turnerae (strain ATCC 39867 / T7901)).